A 356-amino-acid polypeptide reads, in one-letter code: Phosphoribosylformylglycinamidine cyclo-ligase (356 aa).

The protein belongs to the AIR synthase family.

The protein resides in the cytoplasm. The enzyme catalyses 2-formamido-N(1)-(5-O-phospho-beta-D-ribosyl)acetamidine + ATP = 5-amino-1-(5-phospho-beta-D-ribosyl)imidazole + ADP + phosphate + H(+). It participates in purine metabolism; IMP biosynthesis via de novo pathway; 5-amino-1-(5-phospho-D-ribosyl)imidazole from N(2)-formyl-N(1)-(5-phospho-D-ribosyl)glycinamide: step 2/2. In Rhizobium meliloti (strain 1021) (Ensifer meliloti), this protein is Phosphoribosylformylglycinamidine cyclo-ligase.